A 332-amino-acid polypeptide reads, in one-letter code: Anthranilate phosphoribosyltransferase (332 aa).

5-phospho-alpha-D-ribose 1-diphosphate is bound by residues Gly-79, 82-83 (GD), Thr-87, 89-92 (NIST), 107-115 (KHGNRSVSS), and Ser-119. Gly-79 lines the anthranilate pocket. Ser-91 serves as a coordination point for Mg(2+). Anthranilate is bound at residue Asn-110. Anthranilate is bound at residue Arg-165. Positions 223 and 224 each coordinate Mg(2+).

It belongs to the anthranilate phosphoribosyltransferase family. Homodimer. It depends on Mg(2+) as a cofactor.

It carries out the reaction N-(5-phospho-beta-D-ribosyl)anthranilate + diphosphate = 5-phospho-alpha-D-ribose 1-diphosphate + anthranilate. It participates in amino-acid biosynthesis; L-tryptophan biosynthesis; L-tryptophan from chorismate: step 2/5. In terms of biological role, catalyzes the transfer of the phosphoribosyl group of 5-phosphorylribose-1-pyrophosphate (PRPP) to anthranilate to yield N-(5'-phosphoribosyl)-anthranilate (PRA). The protein is Anthranilate phosphoribosyltransferase of Vibrio vulnificus (strain YJ016).